We begin with the raw amino-acid sequence, 360 residues long: Casein kinase II subunit alpha (360 aa).

The Protein kinase domain maps to 38 to 323 (YQLVRKLGRG…AQEAMGHEYF (286 aa)). Residues 44–52 (LGRGKYSEV) and lysine 67 contribute to the ATP site. Aspartate 155 functions as the Proton acceptor in the catalytic mechanism. Positions 334–360 (NGTEQADGQGASNSASSQSSDAKIDGA) are disordered. The segment covering 338–354 (QADGQGASNSASSQSSD) has biased composition (low complexity).

Belongs to the protein kinase superfamily. Ser/Thr protein kinase family. CK2 subfamily. Tetramer of two alpha and two beta chains. As to expression, expressed in a subset of the adult male sensory neurons: CEM head neurons, ray RnB neurons, and hook HOB tail neurons.

It localises to the cell projection. The protein localises to the axon. It is found in the cilium. The protein resides in the dendrite. Its subcellular location is the perikaryon. It carries out the reaction L-seryl-[protein] + ATP = O-phospho-L-seryl-[protein] + ADP + H(+). The enzyme catalyses L-threonyl-[protein] + ATP = O-phospho-L-threonyl-[protein] + ADP + H(+). In terms of biological role, casein kinases are operationally defined by their preferential utilization of acidic proteins such as caseins as substrates. The alpha chain contains the catalytic site. May participate in Wnt signaling. Modulates two aspects of male mating behavior; response to hermaphrodite contact and vulval location, acting in the same pathway as lov-1 and pkd-2. In Caenorhabditis elegans, this protein is Casein kinase II subunit alpha (kin-3).